The chain runs to 173 residues: Large ribosomal subunit protein uL22c (173 aa).

This sequence belongs to the universal ribosomal protein uL22 family. Part of the 50S ribosomal subunit.

The protein resides in the plastid. It is found in the chloroplast. Its function is as follows. This protein binds specifically to 23S rRNA. The globular domain of the protein is located near the polypeptide exit tunnel on the outside of the subunit, while an extended beta-hairpin is found that lines the wall of the exit tunnel in the center of the 70S ribosome. In Drimys granadensis, this protein is Large ribosomal subunit protein uL22c (rpl22).